The primary structure comprises 139 residues: Large ribosomal subunit protein uL16 (139 aa).

Positions 1-20 (MLIPRRVKHRKQHHPKRRGQ) are enriched in basic residues. The interval 1–25 (MLIPRRVKHRKQHHPKRRGQAKGGT) is disordered.

It belongs to the universal ribosomal protein uL16 family. Part of the 50S ribosomal subunit.

Its function is as follows. Binds 23S rRNA and is also seen to make contacts with the A and possibly P site tRNAs. This is Large ribosomal subunit protein uL16 from Streptomyces avermitilis (strain ATCC 31267 / DSM 46492 / JCM 5070 / NBRC 14893 / NCIMB 12804 / NRRL 8165 / MA-4680).